The chain runs to 184 residues: Photosystem I assembly protein Ycf4 (184 aa).

The next 2 membrane-spanning stretches (helical) occupy residues 22–42 (FCWA…GTSS) and 57–77 (IIFF…LFIS).

It belongs to the Ycf4 family.

It is found in the plastid. Its subcellular location is the chloroplast thylakoid membrane. In terms of biological role, seems to be required for the assembly of the photosystem I complex. In Draba nemorosa (Woodland whitlowgrass), this protein is Photosystem I assembly protein Ycf4.